The primary structure comprises 157 residues: MRVGLGYDVHKLVENRKLILGGVEIPYEKGLLGHSDADVLLHAIMDSLLGACALGDIGRHFPDTDNKFKGISSIKLLEEVNKLIIKNGYIINNIDSVIIAQKPKLAPYIENMRVNISNALNIEIDKINIKATTEEGLGFTGSMLGISSQSICSVIKK.

Positions 8 and 10 each coordinate a divalent metal cation. 4-CDP-2-C-methyl-D-erythritol 2-phosphate-binding positions include 8–10 (DVH) and 34–35 (HS). Residue His-42 participates in a divalent metal cation binding. 4-CDP-2-C-methyl-D-erythritol 2-phosphate is bound by residues 56–58 (DIG), 61–65 (FPDTD), 132–135 (TTEE), and Phe-139.

The protein belongs to the IspF family. As to quaternary structure, homotrimer. A divalent metal cation is required as a cofactor.

The enzyme catalyses 4-CDP-2-C-methyl-D-erythritol 2-phosphate = 2-C-methyl-D-erythritol 2,4-cyclic diphosphate + CMP. Its pathway is isoprenoid biosynthesis; isopentenyl diphosphate biosynthesis via DXP pathway; isopentenyl diphosphate from 1-deoxy-D-xylulose 5-phosphate: step 4/6. Functionally, involved in the biosynthesis of isopentenyl diphosphate (IPP) and dimethylallyl diphosphate (DMAPP), two major building blocks of isoprenoid compounds. Catalyzes the conversion of 4-diphosphocytidyl-2-C-methyl-D-erythritol 2-phosphate (CDP-ME2P) to 2-C-methyl-D-erythritol 2,4-cyclodiphosphate (ME-CPP) with a corresponding release of cytidine 5-monophosphate (CMP). The chain is 2-C-methyl-D-erythritol 2,4-cyclodiphosphate synthase from Clostridium botulinum (strain Alaska E43 / Type E3).